The sequence spans 196 residues: uncharacterized protein (196 aa).

Residues 1-21 (MQPEVEPLISPNLGAPGSHRE) form a disordered region.

This is an uncharacterized protein from Mus musculus (Mouse).